The sequence spans 1285 residues: Protein crumbs homolog 2 (1285 aa).

The first 28 residues, 1–28, serve as a signal peptide directing secretion; sequence MALARPGTPDPQALASVLLLLLWAPALS. The required for maximum inhibition of APP amyloid-beta peptide secretion stretch occupies residues 1-350; it reads MALARPGTPD…GFQCHCPDGY (350 aa). The EGF-like 1 domain maps to 67 to 106; the sequence is EPRGCATQPCHHGALCVPQGPDPTGFRCYCVPGFQGPRCE. 27 disulfide bridges follow: cysteine 71/cysteine 82, cysteine 76/cysteine 94, cysteine 96/cysteine 105, cysteine 112/cysteine 123, cysteine 117/cysteine 132, cysteine 134/cysteine 143, cysteine 150/cysteine 161, cysteine 155/cysteine 170, cysteine 172/cysteine 181, cysteine 188/cysteine 199, cysteine 193/cysteine 208, cysteine 210/cysteine 220, cysteine 227/cysteine 238, cysteine 232/cysteine 247, cysteine 249/cysteine 258, cysteine 265/cysteine 276, cysteine 270/cysteine 306, cysteine 308/cysteine 317, cysteine 324/cysteine 335, cysteine 329/cysteine 344, cysteine 346/cysteine 355, cysteine 362/cysteine 373, cysteine 367/cysteine 382, cysteine 384/cysteine 393, cysteine 400/cysteine 411, cysteine 405/cysteine 424, and cysteine 426/cysteine 435. An EGF-like 2; calcium-binding domain is found at 108-144; the sequence is DIDECASRPCHHGATCRNLADRYECHCPLGYAGVTCE. An EGF-like 3; calcium-binding domain is found at 146–182; the sequence is EVDECASAPCLHGGSCLDGVGSFRCVCAPGYGGTRCQ. One can recognise an EGF-like 4; calcium-binding domain in the interval 184-221; that stretch reads DLDECQSQPCAHGGTCHDLVNGFRCDCAGTGYEGTHCE. EGF-like domains lie at 223–259 and 261–318; these read EVLECASAPCEHNASCLEGLGSFRCLCWPGYSGELCE and DEDE…ADCG. Residue asparagine 235 is glycosylated (N-linked (GlcNAc...) asparagine). An O-linked (Glc...) serine glycan is attached at serine 267. Residues 320-356 form the EGF-like 7; calcium-binding domain; the sequence is EVDECASRPCLNGGHCQDLPNGFQCHCPDGYAGPTCE. The 37-residue stretch at 358–394 folds into the EGF-like 8; calcium-binding domain; the sequence is DVDECLSDPCLHGGTCSDTVAGYICRCPETWGGRDCS. Residues 396 to 436 enclose the EGF-like 9 domain; the sequence is QLTGCQGHTCPLAATCIPIFESGVHSYVCHCPPGTHGPFCG. Residues 431–603 enclose the Laminin G-like 1 domain; it reads HGPFCGQNTT…DLGENVLLGC (173 aa). Residues asparagine 438 and asparagine 478 are each glycosylated (N-linked (GlcNAc...) asparagine). 4 disulfide bridges follow: cysteine 579–cysteine 603, cysteine 609–cysteine 620, cysteine 614–cysteine 629, and cysteine 631–cysteine 640. In terms of domain architecture, EGF-like 10 spans 605 to 641; that stretch reads RREQCRPLPCVHGGSCVDLWTHFRCDCARPHRGPTCA. Residues 647 to 805 enclose the Laminin G-like 2 domain; sequence ATFGLGGAPS…RQSWNLTAGC (159 aa). Residues asparagine 669, asparagine 690, asparagine 786, and asparagine 800 are each glycosylated (N-linked (GlcNAc...) asparagine). Disulfide bonds link cysteine 766–cysteine 805, cysteine 811–cysteine 822, cysteine 816–cysteine 831, and cysteine 833–cysteine 842. The 37-residue stretch at 807-843 folds into the EGF-like 11 domain; sequence SEDMCSPDPCFNGGTCLVTWNDFHCTCPANFTGPTCA. N-linked (GlcNAc...) asparagine glycosylation is found at asparagine 836, asparagine 886, asparagine 926, and asparagine 1009. In terms of domain architecture, Laminin G-like 3 spans 871 to 1054; that stretch reads EATFREGPPA…PGTPAPILGC (184 aa). 13 disulfides stabilise this stretch: cysteine 1013–cysteine 1054, cysteine 1060–cysteine 1071, cysteine 1065–cysteine 1080, cysteine 1082–cysteine 1091, cysteine 1098–cysteine 1108, cysteine 1103–cysteine 1118, cysteine 1120–cysteine 1129, cysteine 1138–cysteine 1150, cysteine 1144–cysteine 1159, cysteine 1161–cysteine 1170, cysteine 1177–cysteine 1188, cysteine 1182–cysteine 1197, and cysteine 1199–cysteine 1208. EGF-like domains are found at residues 1056–1092, 1094–1130, 1134–1171, and 1173–1209; these read GAPVCAPSPCLHDGACRDLFDAFACACGPGWEGPRCE, HVDPCHSAPCARGRCHTHPDGRFECRCPPGFGGPRCR, PSKECSLNVTCLDGSPCEGGSPAANCSCLEGLAGQRCQ, and PTLPCEANPCLNGGTCRAAGGVSECICNARFSGQFCE. N-linked (GlcNAc...) asparagine glycosylation is found at asparagine 1141 and asparagine 1158. Residues 1225–1245 form a helical membrane-spanning segment; the sequence is VAVPAACACLLLLLLGLLSGI. Positions 1249-1285 are interaction with EPB41L5; that stretch reads RKRRQSEGTYSPSQQEVAGARLEMDSVLKVPPEERLI.

It belongs to the Crumbs protein family. Associates with the gamma-secretase complex via interaction (via the transmembrane domain) with PSEN1/PS1. Interacts (via intracellular domain) with EPB41L5. Interacts with PALS1. O-glucosylated by POGLUT1 at Ser-267; consists of an O-glucose trisaccharide, in which the O-glucose is elongated by the addition of two xylose residues. O-glucosylation is required for localization at the plasma membrane. In terms of processing, N-glycosylated. As to expression, expressed in glomeruli, podocytes of the glomerular capillary loops, and parietal glomerular epithelial cells in the kidney (at protein level). Expressed in retina, fetal eye and brain. Also expressed in kidney, RPE/choroid, and at low levels in lung, placenta, and heart.

The protein localises to the apical cell membrane. Its subcellular location is the cytoplasm. It localises to the cell junction. The protein resides in the secreted. In terms of biological role, apical polarity protein that plays a central role during the epithelial-to-mesenchymal transition (EMT) at gastrulation, when newly specified mesodermal cells move inside the embryo. Acts by promoting cell ingression, the process by which cells leave the epithelial epiblast and move inside the embryo to form a new tissue layer. The anisotropic distribution of CRB2 and MYH10/myosin-IIB at cell edges define which cells will ingress: cells with high apical CRB2 are probably extruded from the epiblast by neighboring cells with high levels of apical MYH10/myosin-IIB. Plays a role in the maintenance of retinal neuroepithelium organization, structural integrity, adhesion, photoreceptor polarity and retinal photoreceptor layer thickness. May play a role in determining the length of cone photoreceptor outer segments and proliferation of late-born progenitor cells. Also required for maintenance of the apical polarity complex during development of the cortex. Inhibits gamma-secretase-dependent cleavage of APP and secretion of amyloid-beta peptide 40 and amyloid-beta peptide 42, and thereby inhibits gamma-secretase-dependent Notch transcription. The protein is Protein crumbs homolog 2 of Homo sapiens (Human).